The chain runs to 202 residues: Recombination protein RecR (202 aa).

A C4-type zinc finger spans residues 61 to 76; that stretch reads CARCNSFTEDDVCVIC. Residues 84 to 179 form the Toprim domain; it reads SLLCIVETPA…KVTRLARGVP (96 aa).

Belongs to the RecR family.

May play a role in DNA repair. It seems to be involved in an RecBC-independent recombinational process of DNA repair. It may act with RecF and RecO. The chain is Recombination protein RecR from Bordetella avium (strain 197N).